The following is a 319-amino-acid chain: Mercury resistance probable Hg transport protein (319 aa).

Cys298, Cys299, Cys318, and Cys319 together coordinate Hg(2+).

This chain is Mercury resistance probable Hg transport protein, found in Streptomyces lividans.